The primary structure comprises 382 residues: ATP phosphoribosyltransferase regulatory subunit (382 aa).

Belongs to the class-II aminoacyl-tRNA synthetase family. HisZ subfamily. As to quaternary structure, heteromultimer composed of HisG and HisZ subunits.

It localises to the cytoplasm. Its pathway is amino-acid biosynthesis; L-histidine biosynthesis; L-histidine from 5-phospho-alpha-D-ribose 1-diphosphate: step 1/9. In terms of biological role, required for the first step of histidine biosynthesis. May allow the feedback regulation of ATP phosphoribosyltransferase activity by histidine. The polypeptide is ATP phosphoribosyltransferase regulatory subunit (Burkholderia multivorans (strain ATCC 17616 / 249)).